An 83-amino-acid chain; its full sequence is ATP synthase subunit c, chloroplastic (83 aa).

2 consecutive transmembrane segments (helical) span residues 3 to 23 and 57 to 77; these read PIIS…AAIG and LAFM…LLFA.

It belongs to the ATPase C chain family. F-type ATPases have 2 components, F(1) - the catalytic core - and F(0) - the membrane proton channel. F(1) has five subunits: alpha(3), beta(3), gamma(1), delta(1), epsilon(1). F(0) has four main subunits: a(1), b(1), b'(1) and c(10-14). The alpha and beta chains form an alternating ring which encloses part of the gamma chain. F(1) is attached to F(0) by a central stalk formed by the gamma and epsilon chains, while a peripheral stalk is formed by the delta, b and b' chains.

The protein localises to the plastid. The protein resides in the chloroplast thylakoid membrane. F(1)F(0) ATP synthase produces ATP from ADP in the presence of a proton or sodium gradient. F-type ATPases consist of two structural domains, F(1) containing the extramembraneous catalytic core and F(0) containing the membrane proton channel, linked together by a central stalk and a peripheral stalk. During catalysis, ATP synthesis in the catalytic domain of F(1) is coupled via a rotary mechanism of the central stalk subunits to proton translocation. Functionally, key component of the F(0) channel; it plays a direct role in translocation across the membrane. A homomeric c-ring of between 10-14 subunits forms the central stalk rotor element with the F(1) delta and epsilon subunits. The sequence is that of ATP synthase subunit c, chloroplastic from Diacronema lutheri (Unicellular marine alga).